The primary structure comprises 95 residues: Large ribosomal subunit protein bL21 (95 aa).

It belongs to the bacterial ribosomal protein bL21 family. Part of the 50S ribosomal subunit. Contacts protein L20.

Functionally, this protein binds to 23S rRNA in the presence of protein L20. The chain is Large ribosomal subunit protein bL21 from Prosthecochloris vibrioformis (Chlorobium vibrioforme).